A 396-amino-acid chain; its full sequence is Elongation factor Tu (396 aa).

The region spanning Lys10–Val206 is the tr-type G domain. Residues Gly19–Thr26 are G1. Residue Gly19 to Thr26 participates in GTP binding. Thr26 provides a ligand contact to Mg(2+). A G2 region spans residues Gly60–Ser64. The segment at Asp81–Gly84 is G3. Residues Asp81–His85 and Asn136–Asp139 contribute to the GTP site. The interval Asn136–Asp139 is G4. The G5 stretch occupies residues Ser174–Leu176.

It belongs to the TRAFAC class translation factor GTPase superfamily. Classic translation factor GTPase family. EF-Tu/EF-1A subfamily. As to quaternary structure, monomer.

Its subcellular location is the cytoplasm. It catalyses the reaction GTP + H2O = GDP + phosphate + H(+). GTP hydrolase that promotes the GTP-dependent binding of aminoacyl-tRNA to the A-site of ribosomes during protein biosynthesis. The sequence is that of Elongation factor Tu from Legionella pneumophila (strain Paris).